The following is a 458-amino-acid chain: Argininosuccinate lyase (458 aa).

It belongs to the lyase 1 family. Argininosuccinate lyase subfamily.

The protein localises to the cytoplasm. It carries out the reaction 2-(N(omega)-L-arginino)succinate = fumarate + L-arginine. The protein operates within amino-acid biosynthesis; L-arginine biosynthesis; L-arginine from L-ornithine and carbamoyl phosphate: step 3/3. This chain is Argininosuccinate lyase, found in Neisseria meningitidis serogroup C / serotype 2a (strain ATCC 700532 / DSM 15464 / FAM18).